A 125-amino-acid polypeptide reads, in one-letter code: Protein ApaG (125 aa).

Residues 1–125 (MINSPRVCVQ…FRLAVPTLIH (125 aa)) enclose the ApaG domain.

The protein is Protein ApaG of Klebsiella pneumoniae (strain 342).